The primary structure comprises 121 residues: Thioredoxin-like protein (121 aa).

Residues V2 to G112 form the Thioredoxin domain. The cysteines at positions 30 and 33 are disulfide-linked.

Belongs to the thioredoxin family.

Functionally, participates in various redox reactions through the reversible oxidation of its active center dithiol to a disulfide and catalyzes dithiol-disulfide exchange reactions. The sequence is that of Thioredoxin-like protein from Fusarium culmorum.